The chain runs to 1144 residues: Type II inositol polyphosphate 5-phosphatase 14 (1144 aa).

Disordered regions lie at residues 15-67 and 81-118; these read ASLV…FDSS and GRTS…DDIE. 5 WD repeats span residues 158–196, 216–255, 269–307, 445–483, and 524–561; these read ETQT…EVGC, VPTS…TTTA, AHRG…KSLV, EDTR…LREV, and SHNE…PLDS. 2 catalytic regions span residues 791–807 and 870–885; these read DLVA…FGIT and KKRI…YRDN. Residue K949 forms a Glycyl lysine isopeptide (Lys-Gly) (interchain with G-Cter in ubiquitin) linkage. Polar residues predominate over residues 1111–1131; the sequence is TTMTKNLEGSTRYQTDANRGG. Residues 1111-1144 are disordered; it reads TTMTKNLEGSTRYQTDANRGGSTRHRTDDSTRRG. The segment covering 1135–1144 has biased composition (basic and acidic residues); sequence HRTDDSTRRG.

The protein belongs to the inositol polyphosphate 5-phosphatase family. Mg(2+) is required as a cofactor. As to expression, expressed in young seedlings and flowers.

The catalysed reaction is a 1,2-diacyl-sn-glycero-3-phospho-(1D-myo-inositol-4,5-bisphosphate) + H2O = a 1,2-diacyl-sn-glycero-3-phospho-(1D-myo-inositol 4-phosphate) + phosphate. It catalyses the reaction a 1,2-diacyl-sn-glycero-3-phospho-(1D-myo-inositol-3,4,5-trisphosphate) + H2O = a 1,2-diacyl-sn-glycero-3-phospho-(1D-myo-inositol-3,4-bisphosphate) + phosphate. It carries out the reaction 1D-myo-inositol 1,4,5-trisphosphate + H2O = 1D-myo-inositol 1,4-bisphosphate + phosphate. Has phosphatase activity toward PtdIns(4,5)P2, PtdIns(3,4,5)P3 and Ins(1,4,5)P3. In Arabidopsis thaliana (Mouse-ear cress), this protein is Type II inositol polyphosphate 5-phosphatase 14.